Reading from the N-terminus, the 309-residue chain is HPr kinase/phosphorylase (309 aa).

Active-site residues include histidine 138 and lysine 159. 153-160 (GQSGVGKS) provides a ligand contact to ATP. Mg(2+) is bound at residue serine 160. The active-site Proton acceptor; for phosphorylation activity. Proton donor; for dephosphorylation activity is aspartate 177. Residues 201-210 (LEIRGLGIIN) form an important for the catalytic mechanism of both phosphorylation and dephosphorylation region. Residue glutamate 202 coordinates Mg(2+). Arginine 243 is a catalytic residue. Residues 264-269 (PVRPGR) form an important for the catalytic mechanism of dephosphorylation region.

Belongs to the HPrK/P family. Homohexamer. It depends on Mg(2+) as a cofactor.

The catalysed reaction is [HPr protein]-L-serine + ATP = [HPr protein]-O-phospho-L-serine + ADP + H(+). It catalyses the reaction [HPr protein]-O-phospho-L-serine + phosphate + H(+) = [HPr protein]-L-serine + diphosphate. Catalyzes the ATP- as well as the pyrophosphate-dependent phosphorylation of a specific serine residue in HPr, a phosphocarrier protein of the phosphoenolpyruvate-dependent sugar phosphotransferase system (PTS). HprK/P also catalyzes the pyrophosphate-producing, inorganic phosphate-dependent dephosphorylation (phosphorolysis) of seryl-phosphorylated HPr (P-Ser-HPr). The two antagonistic activities of HprK/P are regulated by several intracellular metabolites, which change their concentration in response to the absence or presence of rapidly metabolisable carbon sources (glucose, fructose, etc.) in the growth medium. Also phosphorylates/dephosphorylates the HPr-like catabolite repression protein crh on a specific serine residue. Therefore, by controlling the phosphorylation state of HPr and crh, HPrK/P is a sensor enzyme that plays a major role in the regulation of carbon metabolism and sugar transport: it mediates carbon catabolite repression (CCR), and regulates PTS-catalyzed carbohydrate uptake and inducer exclusion. The sequence is that of HPr kinase/phosphorylase from Bacillus cereus (strain G9842).